The following is a 749-amino-acid chain: Protein lin-54 homolog (749 aa).

Residue K139 forms a Glycyl lysine isopeptide (Lys-Gly) (interchain with G-Cter in SUMO2) linkage. N6-acetyllysine occurs at positions 244 and 249. Residues S264, S282, S310, and S314 each carry the phosphoserine modification. K357 participates in a covalent cross-link: Glycyl lysine isopeptide (Lys-Gly) (interchain with G-Cter in SUMO2). The CRC domain occupies P521–E634. Residues K523–Y536 are DNA-binding. Zn(2+) contacts are provided by C525, C527, C532, C537, C539, C546, C549, C551, and C554. The linker stretch occupies residues I583 to S596. Zn(2+) contacts are provided by C599, C601, C606, C611, C613, C620, C624, C626, and C629. The DNA-binding stretch occupies residues C599–E612. A Phosphoserine modification is found at S635. Residues K639, K659, and K661 each participate in a glycyl lysine isopeptide (Lys-Gly) (interchain with G-Cter in SUMO2) cross-link.

The protein belongs to the lin-54 family. As to quaternary structure, component of the DREAM complex (also named LINC complex) at least composed of E2F4, E2F5, LIN9, LIN37, LIN52, LIN54, MYBL1, MYBL2, RBL1, RBL2, RBBP4, RBL2, TFDP1 and TFDP2. The complex exists in quiescent cells where it represses cell cycle-dependent genes. It dissociates in S phase when LIN9, LIN37, LIN52 and LIN54 form a subcomplex that binds to MYBL2.

The protein resides in the nucleus. Its function is as follows. Component of the DREAM complex, a multiprotein complex that can both act as a transcription activator or repressor depending on the context. In G0 phase, the complex binds to more than 800 promoters and is required for repression of E2F target genes. In S phase, the complex selectively binds to the promoters of G2/M genes whose products are required for mitosis and participates in their cell cycle dependent activation. In the complex, acts as a DNA-binding protein that binds the promoter of CDK1 in a sequence-specific manner. Specifically recognizes the consensus motif 5'-TTYRAA-3' in target DNA. This chain is Protein lin-54 homolog (Lin54), found in Rattus norvegicus (Rat).